Reading from the N-terminus, the 165-residue chain is HTH-type transcriptional regulator IscR (165 aa).

The 130-residue stretch at 2-131 (RLTSKGRYAV…NNITLAELVS (130 aa)) folds into the HTH rrf2-type domain. The H-T-H motif DNA-binding region spans 28–51 (LAEISERQGISLSYLEQLFSRLRK). [2Fe-2S] cluster is bound by residues Cys92, Cys98, and Cys104. Residues 144-165 (NDTRRPLTNGRPQETINVNLHA) are disordered. The segment covering 153–165 (GRPQETINVNLHA) has biased composition (polar residues).

Requires [2Fe-2S] cluster as cofactor.

Functionally, regulates the transcription of several operons and genes involved in the biogenesis of Fe-S clusters and Fe-S-containing proteins. The chain is HTH-type transcriptional regulator IscR from Sodalis glossinidius (strain morsitans).